A 1144-amino-acid chain; its full sequence is Nitric oxide synthase, inducible (1144 aa).

The DINNN-motif; mediates interaction with SPSB1, SPSB2 and SPSB4 motif lies at 23–27 (DINNN). The interval 37–59 (SPTIQDDPKSHQNGSPQLLTGTA) is disordered. Residues 47-59 (HQNGSPQLLTGTA) show a composition bias toward polar residues. 2 residues coordinate Zn(2+): C104 and C109. Position 112 (S112) interacts with (6R)-L-erythro-5,6,7,8-tetrahydrobiopterin. C194 contacts heme b. Residues Q257, W366, Y367, and E371 each contribute to the L-arginine site. (6R)-L-erythro-5,6,7,8-tetrahydrobiopterin contacts are provided by R375, I456, W457, and F470. Y485 contacts heme b. Positions 509 to 529 (FRVLVKVVFFASMLMRKVMAS) are calmodulin-binding. The Flavodoxin-like domain maps to 533-671 (ATVLFATETG…AFRSWAVQTF (139 aa)). FMN-binding residues include T539, E540, T541, K543, and S544. Position 569 is a phosphotyrosine (Y569). Residues S585, T586, S622, C629, E655, and Q659 each coordinate FMN. Residues 724-964 (KNVFTMRLKS…VRSVSGFQLP (241 aa)) enclose the FAD-binding FR-type domain. R744 serves as a coordination point for NADP(+). Positions 766, 900, 902, 903, 918, and 920 each coordinate FAD. T923 is a binding site for NADP(+). The FAD site is built by Y924, V937, C938, and S939. 8 residues coordinate NADP(+): T978, R1011, S1040, R1041, K1047, Y1049, Q1051, and D1084.

It belongs to the NOS family. As to quaternary structure, homodimer. Interacts with NHERF1. Interacts with GAPDH. Interacts with S100A8 and S100A9 to form the iNOS-S100A8/9 transnitrosylase complex. Interacts with SPSB1, SPSB2 and SPSB4. Interacts with ELOC and CUL5 in the presence of SPSB1 or SPSB2 or SPSB4. Forms a complex with ASL, ASS1 and HSP90AA1; the complex regulates cell-autonomous L-arginine synthesis and citrulline recycling while channeling extracellular L-arginine to nitric oxide synthesis pathway. Heme b serves as cofactor. Requires FAD as cofactor. FMN is required as a cofactor. It depends on (6R)-L-erythro-5,6,7,8-tetrahydrobiopterin as a cofactor. In terms of processing, polyubiquitinated; mediated by SPSB1, SPSB2 and SPSB4, leading to proteasomal degradation. In terms of tissue distribution, macrophages.

The protein localises to the cytoplasm. It localises to the cytosol. The enzyme catalyses 2 L-arginine + 3 NADPH + 4 O2 + H(+) = 2 L-citrulline + 2 nitric oxide + 3 NADP(+) + 4 H2O. Not stimulated by calcium/calmodulin. Aspirin inhibits expression and function of this enzyme and effects may be exerted at the level of translational/post-translational modification and directly on the catalytic activity. Produces nitric oxide (NO) which is a messenger molecule with diverse functions throughout the body. In macrophages, NO mediates tumoricidal and bactericidal actions. Also has nitrosylase activity and mediates cysteine S-nitrosylation of cytoplasmic target proteins such PTGS2/COX2. As component of the iNOS-S100A8/9 transnitrosylase complex involved in the selective inflammatory stimulus-dependent S-nitrosylation of GAPDH implicated in regulation of the GAIT complex activity and probably multiple targets including ANXA5, EZR, MSN and VIM. Involved in inflammation, enhances the synthesis of pro-inflammatory mediators such as IL6 and IL8. The protein is Nitric oxide synthase, inducible (Nos2) of Mus musculus (Mouse).